The chain runs to 448 residues: Trigger factor (448 aa).

A PPIase FKBP-type domain is found at 172-257; the sequence is GDRVTVDFVG…MKKIEWPHLP (86 aa).

Belongs to the FKBP-type PPIase family. Tig subfamily.

It localises to the cytoplasm. It carries out the reaction [protein]-peptidylproline (omega=180) = [protein]-peptidylproline (omega=0). In terms of biological role, involved in protein export. Acts as a chaperone by maintaining the newly synthesized protein in an open conformation. Functions as a peptidyl-prolyl cis-trans isomerase. This chain is Trigger factor, found in Burkholderia cenocepacia (strain HI2424).